The chain runs to 262 residues: Nickel import ATP-binding protein NikD (262 aa).

The ABC transporter domain occupies 6-249; it reads LAIEGLTATT…PGHEVTRMLV (244 aa). 42 to 49 is an ATP binding site; it reads GASGSGKS.

It belongs to the ABC transporter superfamily. Nickel importer (TC 3.A.1.5.3) family. In terms of assembly, the complex is composed of two ATP-binding proteins (NikD and NikE), two transmembrane proteins (NikB and NikC) and a solute-binding protein (NikA).

The protein resides in the cell inner membrane. The enzyme catalyses Ni(2+)(out) + ATP + H2O = Ni(2+)(in) + ADP + phosphate + H(+). Functionally, part of the ABC transporter complex NikABCDE involved in nickel import. Responsible for energy coupling to the transport system. This chain is Nickel import ATP-binding protein NikD, found in Brucella suis biovar 1 (strain 1330).